The sequence spans 173 residues: NADH-ubiquinone oxidoreductase chain 6 (173 aa).

A run of 5 helical transmembrane segments spans residues 1–21 (MTYV…AVAS), 25–45 (PYFG…VLIW), 53–73 (LVLF…SAAL), 82–102 (LGSW…FGIL), and 142–162 (GVLL…LELV).

This sequence belongs to the complex I subunit 6 family.

It is found in the mitochondrion membrane. It catalyses the reaction a ubiquinone + NADH + 5 H(+)(in) = a ubiquinol + NAD(+) + 4 H(+)(out). Core subunit of the mitochondrial membrane respiratory chain NADH dehydrogenase (Complex I) that is believed to belong to the minimal assembly required for catalysis. Complex I functions in the transfer of electrons from NADH to the respiratory chain. The immediate electron acceptor for the enzyme is believed to be ubiquinone. This is NADH-ubiquinone oxidoreductase chain 6 (MT-ND6) from Tetraodon nigroviridis (Spotted green pufferfish).